The chain runs to 227 residues: ATP-dependent dethiobiotin synthetase BioD (227 aa).

13-18 (DIGKTY) is an ATP binding site. Thr17 provides a ligand contact to Mg(2+). The active site involves Lys38. A substrate-binding site is contributed by Ser42. ATP is bound by residues Asp55, 116–119 (EGSG), and 179–180 (NN). Mg(2+) is bound by residues Asp55 and Glu116.

This sequence belongs to the dethiobiotin synthetase family. As to quaternary structure, homodimer. Mg(2+) is required as a cofactor.

It localises to the cytoplasm. It carries out the reaction (7R,8S)-7,8-diammoniononanoate + CO2 + ATP = (4R,5S)-dethiobiotin + ADP + phosphate + 3 H(+). The protein operates within cofactor biosynthesis; biotin biosynthesis; biotin from 7,8-diaminononanoate: step 1/2. Functionally, catalyzes a mechanistically unusual reaction, the ATP-dependent insertion of CO2 between the N7 and N8 nitrogen atoms of 7,8-diaminopelargonic acid (DAPA, also called 7,8-diammoniononanoate) to form a ureido ring. This chain is ATP-dependent dethiobiotin synthetase BioD, found in Clostridium botulinum (strain Eklund 17B / Type B).